Reading from the N-terminus, the 242-residue chain is Cysteine-rich venom protein VAR11 (242 aa).

Residues 1 to 19 (MILLKLYLTLAAILCQSRG) form the signal peptide. The SCP domain occupies 41 to 169 (NKHNDLRRTV…SLKYFQVCQY (129 aa)). 8 cysteine pairs are disulfide-bonded: Cys-77/Cys-156, Cys-95/Cys-170, Cys-151/Cys-167, Cys-189/Cys-196, Cys-192/Cys-201, Cys-205/Cys-237, Cys-214/Cys-231, and Cys-223/Cys-235. In terms of domain architecture, ShKT spans 205–237 (CAYNDDYTSCPDLTKQVGCNHPVTANCKASCQC).

The protein belongs to the CRISP family. Expressed by the venom gland.

It localises to the secreted. Blocks ryanodine receptors, and potassium channels. This is Cysteine-rich venom protein VAR11 from Varanus varius (Lace monitor lizard).